The primary structure comprises 146 residues: Ribonuclease P protein component (146 aa).

It belongs to the RnpA family. As to quaternary structure, consists of a catalytic RNA component (M1 or rnpB) and a protein subunit.

It carries out the reaction Endonucleolytic cleavage of RNA, removing 5'-extranucleotides from tRNA precursor.. RNaseP catalyzes the removal of the 5'-leader sequence from pre-tRNA to produce the mature 5'-terminus. It can also cleave other RNA substrates such as 4.5S RNA. The protein component plays an auxiliary but essential role in vivo by binding to the 5'-leader sequence and broadening the substrate specificity of the ribozyme. This Chlorobium phaeobacteroides (strain DSM 266 / SMG 266 / 2430) protein is Ribonuclease P protein component.